We begin with the raw amino-acid sequence, 388 residues long: Protein SopA (388 aa).

Belongs to the ParA family.

Its function is as follows. This protein is essential for plasmid partition. It ensures the proper distribution of newly replicated plasmids to daughter cells during cell division. SopA is trans-acting. The chain is Protein SopA (sopA) from Escherichia coli O157:H7.